A 575-amino-acid chain; its full sequence is Thrombomodulin (575 aa).

Positions 1 to 18 (MLGVLVLGALALAGLGFP) are cleaved as a signal peptide. Residues 19 to 515 (APAEPQPGGS…TPPAVGLVHS (497 aa)) are Extracellular-facing. In terms of domain architecture, C-type lectin spans 31 to 169 (VEHDCFALYP…VKADGFLCEF (139 aa)). Residues asparagine 47, asparagine 115, and asparagine 116 are each glycosylated (N-linked (GlcNAc...) asparagine). Cystine bridges form between cysteine 137–cysteine 158, cysteine 245–cysteine 256, cysteine 252–cysteine 265, cysteine 267–cysteine 280, cysteine 288–cysteine 296, cysteine 292–cysteine 308, cysteine 310–cysteine 323, cysteine 329–cysteine 340, cysteine 336–cysteine 349, cysteine 351–cysteine 362, cysteine 369–cysteine 378, cysteine 374–cysteine 388, cysteine 390–cysteine 404, cysteine 408–cysteine 413, cysteine 417–cysteine 425, cysteine 427–cysteine 439, cysteine 445–cysteine 455, cysteine 451–cysteine 464, and cysteine 466–cysteine 480. 2 consecutive EGF-like domains span residues 241 to 281 (GAWD…RSCT) and 284 to 324 (ATQS…HRCE). The 39-residue stretch at 325–363 (DVDDCILEPSPCPQRCVNTQGGFECHCYPNYDLVDGECV) folds into the EGF-like 3; calcium-binding domain. A (3R)-3-hydroxyasparagine modification is found at asparagine 342. 2 consecutive EGF-like domains span residues 365–405 (PVDP…HRCQ) and 404–440 (CQMF…FICT). An N-linked (GlcNAc...) asparagine glycan is attached at asparagine 382. Residue asparagine 409 is glycosylated (N-linked (GlcNAc...) asparagine). The EGF-like 6; calcium-binding domain occupies 441 to 481 (DIDECENGGFCSGVCHNLPGTFECICGPDSALARHIGTDCD). Residues 481 to 515 (DSGKVDGGDSGSGEPPPSPTPGSTLTPPAVGLVHS) form an involved in alpha-L/beta-2 and alpha-M/beta-2 integrin binding region. A disordered region spans residues 484–506 (KVDGGDSGSGEPPPSPTPGSTLT). Residues serine 490 and serine 492 are each glycosylated (O-linked (Xyl...) (chondroitin sulfate) serine). The helical transmembrane segment at 516–539 (GLLIGISIASLCLVVALLALLCHL) threads the bilayer. The Cytoplasmic segment spans residues 540-575 (RKKQGAARAKMEYKCAAPSKEVVLQHVRTERTPQRL).

As to quaternary structure, interacts with ITGAL, ITGAM and ITGB2. Interacts with thrombin/F2; this interaction switches the specificity of thrombin from a procoagulant to an anticoagulant and antifibrinolytic protease. Interacts with ANGP1 and ANGP2; these interactions significantly inhibit the generation of activated PC and TAFIa/CPB2 by the thrombin/thrombomodulin complex. Interacts with PF4; this interaction enhances generation of activated protein C. Interacts with HMGB1; this interaction inhibits HMGB1 inflammatory activity. N-glycosylated. Post-translationally, the iron and 2-oxoglutarate dependent 3-hydroxylation of aspartate and asparagine is (R) stereospecific within EGF domains. In terms of tissue distribution, endothelial cells are unique in synthesizing thrombomodulin.

It is found in the membrane. Functionally, endothelial cell receptor that plays a critical role in regulating several physiological processes including hemostasis, coagulation, fibrinolysis, inflammation, and angiogenesis. Acts as a cofactor for thrombin activation of protein C/PROC on the surface of vascular endothelial cells leading to initiation of the activated protein C anticoagulant pathway. Also accelerates the activation of the plasma carboxypeptidase B2/CPB2, which catalyzes removal of C-terminal basic amino acids from its substrates including kinins or anaphylatoxins leading to fibrinolysis inhibition. Plays critical protective roles in changing the cleavage specificity of protease-activated receptor 1/PAR1, inhibiting endothelial cell permeability and inflammation. Suppresses inflammation distinctly from its anticoagulant cofactor activity by sequestering HMGB1 thereby preventing it from engaging cellular receptors such as RAGE and contributing to the inflammatory response. The polypeptide is Thrombomodulin (THBD) (Homo sapiens (Human)).